The primary structure comprises 254 residues: Pyrroloquinoline-quinone synthase (254 aa).

Belongs to the PqqC family.

It carries out the reaction 6-(2-amino-2-carboxyethyl)-7,8-dioxo-1,2,3,4,7,8-hexahydroquinoline-2,4-dicarboxylate + 3 O2 = pyrroloquinoline quinone + 2 H2O2 + 2 H2O + H(+). Its pathway is cofactor biosynthesis; pyrroloquinoline quinone biosynthesis. Functionally, ring cyclization and eight-electron oxidation of 3a-(2-amino-2-carboxyethyl)-4,5-dioxo-4,5,6,7,8,9-hexahydroquinoline-7,9-dicarboxylic-acid to PQQ. This Rhodopseudomonas palustris (strain TIE-1) protein is Pyrroloquinoline-quinone synthase.